The following is a 270-amino-acid chain: tRNA pseudouridine synthase A (270 aa).

The active-site Nucleophile is aspartate 60. The segment at 107–111 (FHARF) is RNA binding. Tyrosine 118 contributes to the substrate binding site. The tract at residues 168-172 (QCQSR) is interaction with tRNA.

It belongs to the tRNA pseudouridine synthase TruA family. In terms of assembly, homodimer.

It catalyses the reaction uridine(38/39/40) in tRNA = pseudouridine(38/39/40) in tRNA. In terms of biological role, formation of pseudouridine at positions 38, 39 and 40 in the anticodon stem and loop of transfer RNAs. The protein is tRNA pseudouridine synthase A of Klebsiella pneumoniae subsp. pneumoniae (strain ATCC 700721 / MGH 78578).